The sequence spans 72 residues: Threonine dehydratase operon activator protein (72 aa).

In terms of biological role, probable trans-acting positive activator for the tdc operon. The chain is Threonine dehydratase operon activator protein (tdcR) from Escherichia coli (strain K12).